Consider the following 247-residue polypeptide: Homeobox-leucine zipper protein HOX17 (247 aa).

The interval 58–81 (ERAGLRGGGGSDEEDGGCGIDGSR) is disordered. A DNA-binding region (homeobox) is located at residues 79–138 (GSRKKLRLSKDQSAVLEDSFREHPTLNPRQKATLAQQLGLRPRQVEVWFQNRRARTKLKQ). The interval 137–182 (KQTEVDCEFLKRCCETLTEENRRLQKEVQELRALKLVSPHLYMNMS) is leucine-zipper.

Belongs to the HD-ZIP homeobox family. Class II subfamily. Expressed in seedlings, roots, stems, leaf sheaths and blades and panicles.

It localises to the nucleus. Functionally, probable transcription factor. The polypeptide is Homeobox-leucine zipper protein HOX17 (HOX17) (Oryza sativa subsp. indica (Rice)).